Consider the following 229-residue polypeptide: Probable methylthioribulose-1-phosphate dehydratase (229 aa).

Cysteine 97 contacts substrate. Zn(2+) contacts are provided by histidine 115 and histidine 117. The Proton donor/acceptor role is filled by glutamate 139. Histidine 195 contributes to the Zn(2+) binding site.

This sequence belongs to the aldolase class II family. MtnB subfamily. Zn(2+) is required as a cofactor.

The protein resides in the cytoplasm. The catalysed reaction is 5-(methylsulfanyl)-D-ribulose 1-phosphate = 5-methylsulfanyl-2,3-dioxopentyl phosphate + H2O. The protein operates within amino-acid biosynthesis; L-methionine biosynthesis via salvage pathway; L-methionine from S-methyl-5-thio-alpha-D-ribose 1-phosphate: step 2/6. In terms of biological role, catalyzes the dehydration of methylthioribulose-1-phosphate (MTRu-1-P) into 2,3-diketo-5-methylthiopentyl-1-phosphate (DK-MTP-1-P). This is Probable methylthioribulose-1-phosphate dehydratase from Acyrthosiphon pisum (Pea aphid).